The primary structure comprises 379 residues: Lactosylceramide 1,3-N-acetyl-beta-D-glucosaminyltransferase A (379 aa).

The Cytoplasmic portion of the chain corresponds to Met1 to His12. Residues Phe13–Trp30 traverse the membrane as a helical; Signal-anchor for type II membrane protein segment. The Lumenal segment spans residues Glu31–Thr379. Asn57, Asn113, Asn168, and Asn277 each carry an N-linked (GlcNAc...) asparagine glycan.

This sequence belongs to the glycosyltransferase 31 family.

It localises to the golgi apparatus membrane. The catalysed reaction is a beta-D-Gal-(1-&gt;4)-beta-D-Glc-(1&lt;-&gt;1)-Cer(d18:1(4E)) + UDP-N-acetyl-alpha-D-glucosamine = a beta-D-GlcNAc-(1-&gt;3)-beta-D-Gal-(1-&gt;4)-beta-D-Glc-(1&lt;-&gt;1)-Cer(d18:1(4E)) + UDP + H(+). It catalyses the reaction a neolactoside nLc4Cer(d18:1(4E)) + UDP-N-acetyl-alpha-D-glucosamine = a neolactoside IV(3)-beta-GlcNAc-nLc4Cer(d18:1(4E)) + UDP + H(+). It functions in the pathway protein modification; protein glycosylation. In terms of biological role, beta-1,3-N-acetylglucosaminyltransferase that plays a key role in the synthesis of lacto- or neolacto-series carbohydrate chains on glycolipids. This chain is Lactosylceramide 1,3-N-acetyl-beta-D-glucosaminyltransferase A (b3gnt5a), found in Danio rerio (Zebrafish).